Here is a 429-residue protein sequence, read N- to C-terminus: Adenylosuccinate synthetase (429 aa).

GTP-binding positions include 12–18 (GDEGKGK) and 40–42 (GHT). The active-site Proton acceptor is D13. 2 residues coordinate Mg(2+): D13 and G40. IMP contacts are provided by residues 13 to 16 (DEGK), 38 to 41 (NAGH), T129, R143, Q223, T238, and R302. The active-site Proton donor is H41. 298 to 304 (VVTGRKR) serves as a coordination point for substrate. Residues R304, 330–332 (KLD), and 412–414 (STS) each bind GTP.

The protein belongs to the adenylosuccinate synthetase family. As to quaternary structure, homodimer. Mg(2+) is required as a cofactor.

It is found in the cytoplasm. The enzyme catalyses IMP + L-aspartate + GTP = N(6)-(1,2-dicarboxyethyl)-AMP + GDP + phosphate + 2 H(+). It participates in purine metabolism; AMP biosynthesis via de novo pathway; AMP from IMP: step 1/2. Its function is as follows. Plays an important role in the de novo pathway of purine nucleotide biosynthesis. Catalyzes the first committed step in the biosynthesis of AMP from IMP. This Brucella ovis (strain ATCC 25840 / 63/290 / NCTC 10512) protein is Adenylosuccinate synthetase.